The primary structure comprises 428 residues: 3-oxo-tetronate kinase (428 aa).

Residues serine 267, glycine 365–threonine 368, and glycine 409 each bind ATP.

The protein belongs to the four-carbon acid sugar kinase family.

It carries out the reaction 3-dehydro-L-erythronate + ATP = 3-dehydro-4-O-phospho-L-erythronate + ADP + H(+). The catalysed reaction is 3-dehydro-D-erythronate + ATP = 3-dehydro-4-O-phospho-D-erythronate + ADP + H(+). Its function is as follows. Catalyzes the ATP-dependent phosphorylation of 3-oxo-tetronate to 3-oxo-tetronate 4-phosphate. This Burkholderia multivorans (strain ATCC 17616 / 249) protein is 3-oxo-tetronate kinase.